The sequence spans 255 residues: 1-(5-phosphoribosyl)-5-[(5-phosphoribosylamino)methylideneamino] imidazole-4-carboxamide isomerase (255 aa).

The active-site Proton acceptor is the aspartate 8. Aspartate 129 (proton donor) is an active-site residue.

The protein belongs to the HisA/HisF family.

Its subcellular location is the cytoplasm. The enzyme catalyses 1-(5-phospho-beta-D-ribosyl)-5-[(5-phospho-beta-D-ribosylamino)methylideneamino]imidazole-4-carboxamide = 5-[(5-phospho-1-deoxy-D-ribulos-1-ylimino)methylamino]-1-(5-phospho-beta-D-ribosyl)imidazole-4-carboxamide. The protein operates within amino-acid biosynthesis; L-histidine biosynthesis; L-histidine from 5-phospho-alpha-D-ribose 1-diphosphate: step 4/9. The sequence is that of 1-(5-phosphoribosyl)-5-[(5-phosphoribosylamino)methylideneamino] imidazole-4-carboxamide isomerase from Prochlorococcus marinus (strain MIT 9515).